The chain runs to 352 residues: Isoflavone-7-O-methyltransferase 8 (352 aa).

118-127 serves as a coordination point for substrate; the sequence is VLDPTLSGSY. The S-adenosyl-L-methionine site is built by Gly-196, Asp-219, Asp-239, Met-240, and Lys-253. His-257 serves as the catalytic Proton acceptor.

Belongs to the class I-like SAM-binding methyltransferase superfamily. Cation-independent O-methyltransferase family. COMT subfamily. As to quaternary structure, homodimer.

It catalyses the reaction a 7-hydroxyisoflavone + S-adenosyl-L-methionine = a 7-methoxyisoflavone + S-adenosyl-L-homocysteine + H(+). Its pathway is phytoalexin biosynthesis; medicarpin biosynthesis. Functionally, transfers a methyl group to 7-hydroxyls of the isoflavones daidzein, genistein and 6,7,4'-trihydroxyisoflavone. Can also methylate (+)6a-hydroxymaackiain with lower efficiency. The sequence is that of Isoflavone-7-O-methyltransferase 8 from Medicago sativa (Alfalfa).